The chain runs to 75 residues: U6-lycotoxin-Ls1c (75 aa).

Positions 1-21 (MKLLLFTALVLVVISLIEVEA) are cleaved as a signal peptide. The propeptide occupies 22-25 (ENER). 4 disulfide bridges follow: cysteine 27–cysteine 42, cysteine 34–cysteine 47, cysteine 41–cysteine 65, and cysteine 49–cysteine 63.

It belongs to the neurotoxin 19 (CSTX) family. 06 (U6-Lctx) subfamily. Expressed by the venom gland.

The protein resides in the secreted. This is U6-lycotoxin-Ls1c from Lycosa singoriensis (Wolf spider).